The chain runs to 145 residues: Ribosomal RNA large subunit methyltransferase H (145 aa).

S-adenosyl-L-methionine is bound by residues leucine 62, glycine 94, and 113–118; that span reads LGQLTL.

It belongs to the RNA methyltransferase RlmH family. In terms of assembly, homodimer.

It localises to the cytoplasm. The enzyme catalyses pseudouridine(1915) in 23S rRNA + S-adenosyl-L-methionine = N(3)-methylpseudouridine(1915) in 23S rRNA + S-adenosyl-L-homocysteine + H(+). In terms of biological role, specifically methylates the pseudouridine at position 1915 (m3Psi1915) in 23S rRNA. In Deinococcus deserti (strain DSM 17065 / CIP 109153 / LMG 22923 / VCD115), this protein is Ribosomal RNA large subunit methyltransferase H.